The following is a 1330-amino-acid chain: Kinectin (1330 aa).

Residues 1–6 (MEFYES) lie on the Cytoplasmic side of the membrane. Residues 7–29 (TYFIVLIPSVVITVIFLFFWLFM) traverse the membrane as a helical; Signal-anchor for type II membrane protein segment. Topologically, residues 30-1330 (KETLYDEVLA…KEKEHYQVLE (1301 aa)) are lumenal. 2 disordered regions span residues 49–81 (PTKT…ESVP) and 108–218 (SSSV…KQKA). Residues Ser-75 and Ser-77 each carry the phosphoserine modification. Basic residues predominate over residues 113–122 (ERKKKEKKHK). Residues 123-135 (PVLEEQVTKESDV) show a composition bias toward basic and acidic residues. Residue Thr-153 is modified to Phosphothreonine. Phosphoserine is present on Ser-156. The span at 161 to 171 (SKKKPGQKKSK) shows a compositional bias: basic residues. 5 N-linked (GlcNAc...) asparagine glycosylation sites follow: Asn-172, Asn-435, Asn-772, Asn-904, and Asn-1055. Residues 172-182 (NGSDDQDKKVE) show a composition bias toward basic and acidic residues. The stretch at 332–1329 (HQLQEKDKLL…TKEKEHYQVL (998 aa)) forms a coiled coil. Ser-1085 is subject to Phosphoserine. Residue Asn-1236 is glycosylated (N-linked (GlcNAc...) asparagine). At Ser-1286 the chain carries Phosphoserine. A glycan (N-linked (GlcNAc...) asparagine) is linked at Asn-1302.

It belongs to the kinectin family. Parallel homodimers formed between the membrane-bound and the cytosolic form, and also between 2 cytosolic forms. In terms of tissue distribution, expressed in male brain, heart, kidney, liver, lung, spleen and testis.

It is found in the endoplasmic reticulum membrane. Receptor for kinesin thus involved in kinesin-driven vesicle motility. This is Kinectin (KTN1) from Vulpes vulpes (Red fox).